Here is a 120-residue protein sequence, read N- to C-terminus: Fluoride-specific ion channel FluC (120 aa).

Transmembrane regions (helical) follow at residues 30-50 (FGTL…YGLL), 66-86 (VGFL…LLLL), and 96-116 (LNII…LQLV). Na(+) contacts are provided by G70 and T73.

The protein belongs to the fluoride channel Fluc/FEX (TC 1.A.43) family.

The protein localises to the cell inner membrane. The enzyme catalyses fluoride(in) = fluoride(out). Na(+) is not transported, but it plays an essential structural role and its presence is essential for fluoride channel function. In terms of biological role, fluoride-specific ion channel. Important for reducing fluoride concentration in the cell, thus reducing its toxicity. The polypeptide is Fluoride-specific ion channel FluC (Pseudoalteromonas translucida (strain TAC 125)).